The primary structure comprises 329 residues: Ribosomal protein L11 methyltransferase (329 aa).

The S-adenosyl-L-methionine site is built by T177, G198, D220, and N264.

This sequence belongs to the methyltransferase superfamily. PrmA family.

The protein resides in the cytoplasm. It carries out the reaction L-lysyl-[protein] + 3 S-adenosyl-L-methionine = N(6),N(6),N(6)-trimethyl-L-lysyl-[protein] + 3 S-adenosyl-L-homocysteine + 3 H(+). In terms of biological role, methylates ribosomal protein L11. The sequence is that of Ribosomal protein L11 methyltransferase from Helicobacter acinonychis (strain Sheeba).